A 1311-amino-acid chain; its full sequence is Clustered mitochondria protein homolog (1311 aa).

The segment at 1-46 (MAATNEVIPTSENPSDVSGSSQKLATEETALANGVDHEEEDSGEAG) is disordered. Residues 7–24 (VIPTSENPSDVSGSSQKL) are compositionally biased toward polar residues. One can recognise a Clu domain in the interval 335-579 (DITRTQENYL…RVTPLDITWM (245 aa)). Disordered stretches follow at residues 629-691 (ERKR…QERI) and 915-965 (QSQT…VNAS). Over residues 655 to 691 (EASKSDEPTENGELAKKADESDKDAEPSKPAADQERI) the composition is skewed to basic and acidic residues. Over residues 915 to 930 (QSQTEAAAAPPTTNGE) the composition is skewed to polar residues. TPR repeat units lie at residues 1034 to 1067 (ARVY…SERT), 1076 to 1109 (LLNY…WKVV), and 1118 to 1151 (ITTI…CEEV). Residues 1236-1311 (VSPRVTLGQT…RGGAAAAAGK (76 aa)) are disordered. Residues 1242–1253 (LGQTQLQPQVGQ) are compositionally biased toward polar residues. Positions 1259-1279 (AGRDSRSSRGLDSRSIDELLK) are enriched in basic and acidic residues. Positions 1289–1303 (KNKKRPGRSNPKRRG) are enriched in basic residues.

The protein belongs to the CLU family. As to quaternary structure, may associate with the eukaryotic translation initiation factor 3 (eIF-3) complex.

It localises to the cytoplasm. In terms of biological role, mRNA-binding protein involved in proper cytoplasmic distribution of mitochondria. The chain is Clustered mitochondria protein homolog from Sclerotinia sclerotiorum (strain ATCC 18683 / 1980 / Ss-1) (White mold).